Reading from the N-terminus, the 124-residue chain is Fluoride-specific ion channel FluC (124 aa).

The next 4 membrane-spanning stretches (helical) occupy residues 5 to 25 (FLQVALGGALGSAARYGVNIL), 35 to 55 (LGTLSVNIAGCLAMGLLAALL), 63 to 83 (LAPFLLTGMLGGFTTFSAFAL), and 98 to 118 (LGYVLGSVVLSLAAVIAGLTV). Na(+)-binding residues include G73 and T76.

The protein belongs to the fluoride channel Fluc/FEX (TC 1.A.43) family.

The protein localises to the cell inner membrane. The enzyme catalyses fluoride(in) = fluoride(out). With respect to regulation, na(+) is not transported, but it plays an essential structural role and its presence is essential for fluoride channel function. In terms of biological role, fluoride-specific ion channel. Important for reducing fluoride concentration in the cell, thus reducing its toxicity. The polypeptide is Fluoride-specific ion channel FluC (Paracoccus denitrificans (strain Pd 1222)).